An 829-amino-acid polypeptide reads, in one-letter code: G-type lectin S-receptor-like serine/threonine-protein kinase At1g34300 (829 aa).

The first 25 residues, 1 to 25, serve as a signal peptide directing secretion; sequence MAVKTPFLKLLPLLLLLLHFPFSFS. 2 consecutive Bulb-type lectin domains span residues 26–140 and 143–260; these read TIPL…SSFD and TDTI…PVNA. Residues 26 to 421 are Extracellular-facing; that stretch reads TIPLGSVIYA…KGDDNNSKVH (396 aa). N-linked (GlcNAc...) asparagine glycans are attached at residues Asn-46, Asn-98, Asn-130, Asn-151, Asn-172, Asn-178, Asn-189, and Asn-195. One can recognise an EGF-like domain in the interval 264–301; it reads AVDQCLVYGYCGNFGICSYNDTNPICSCPSRNFDFVDV. 5 cysteine pairs are disulfide-bonded: Cys-268–Cys-280, Cys-274–Cys-289, Cys-317–Cys-399, Cys-350–Cys-373, and Cys-354–Cys-360. N-linked (GlcNAc...) asparagine glycosylation is found at Asn-283 and Asn-320. An Apple domain is found at 317–399; that stretch reads CSGNTTMLDL…VPSTSYVKVC (83 aa). Asn-416 is a glycosylation site (N-linked (GlcNAc...) asparagine). Residues 422-442 form a helical membrane-spanning segment; it reads LWIVAVAVIAGLLGLVAVEIG. Topologically, residues 443 to 829 are cytoplasmic; sequence LWWCCCRKNP…RISEGSMLGS (387 aa). Residues 484 to 759 enclose the Protein kinase domain; sequence KSFKEKLGAG…GKVVQMLEGI (276 aa). ATP-binding positions include 490–498 and Lys-512; that span reads LGAGGFGTV. The residue at position 532 (Ser-532) is a Phosphoserine. Residues 572-589 form a caM-binding region; it reads DSAKFLTWEYRFNIALGT. The Proton acceptor role is filled by Asp-608. Phosphoserine occurs at positions 625 and 799.

This sequence belongs to the protein kinase superfamily. Ser/Thr protein kinase family.

It localises to the cell membrane. It carries out the reaction L-seryl-[protein] + ATP = O-phospho-L-seryl-[protein] + ADP + H(+). The catalysed reaction is L-threonyl-[protein] + ATP = O-phospho-L-threonyl-[protein] + ADP + H(+). The protein is G-type lectin S-receptor-like serine/threonine-protein kinase At1g34300 of Arabidopsis thaliana (Mouse-ear cress).